Here is a 437-residue protein sequence, read N- to C-terminus: Serine--tRNA ligase (437 aa).

244–246 is an L-serine binding site; the sequence is TAE. 275-277 is a binding site for ATP; it reads RSE. Glu298 serves as a coordination point for L-serine. 362-365 lines the ATP pocket; that stretch reads EISS. Ser397 contacts L-serine.

It belongs to the class-II aminoacyl-tRNA synthetase family. Type-1 seryl-tRNA synthetase subfamily. In terms of assembly, homodimer. The tRNA molecule binds across the dimer.

Its subcellular location is the cytoplasm. The catalysed reaction is tRNA(Ser) + L-serine + ATP = L-seryl-tRNA(Ser) + AMP + diphosphate + H(+). It catalyses the reaction tRNA(Sec) + L-serine + ATP = L-seryl-tRNA(Sec) + AMP + diphosphate + H(+). The protein operates within aminoacyl-tRNA biosynthesis; selenocysteinyl-tRNA(Sec) biosynthesis; L-seryl-tRNA(Sec) from L-serine and tRNA(Sec): step 1/1. Functionally, catalyzes the attachment of serine to tRNA(Ser). Is also able to aminoacylate tRNA(Sec) with serine, to form the misacylated tRNA L-seryl-tRNA(Sec), which will be further converted into selenocysteinyl-tRNA(Sec). The chain is Serine--tRNA ligase from Nitrosomonas europaea (strain ATCC 19718 / CIP 103999 / KCTC 2705 / NBRC 14298).